We begin with the raw amino-acid sequence, 409 residues long: 3-isopropylmalate dehydrogenase 1, chloroplastic (409 aa).

The transit peptide at 1-37 (MAAFLQTNISLNAIKIVPGKYSSLTDHQFRAPYRIRC) directs the protein to the chloroplast. Phosphoserine is present on serine 74. 118–133 (IGGYKWDKNEKHLRPE) contributes to the NAD(+) binding site. 3 residues coordinate substrate: arginine 140, arginine 150, and arginine 178. An NAD(+)-binding site is contributed by asparagine 238. Substrate is bound at residue aspartate 268. Mg(2+) is bound at residue aspartate 268. Asparagine 269 contacts NAD(+). Positions 292 and 296 each coordinate Mg(2+). 322–338 (EPIHGSAPDIAGQDKAN) serves as a coordination point for NAD(+).

This sequence belongs to the isocitrate and isopropylmalate dehydrogenases family. Homodimer. Mg(2+) is required as a cofactor. It depends on Mn(2+) as a cofactor. As to expression, highly expressed in seedlings, leaves, stems and roots and, to a lower extent, in flowers, pollen and siliques.

The protein resides in the plastid. Its subcellular location is the chloroplast stroma. It catalyses the reaction (2R,3S)-3-isopropylmalate + NAD(+) = 4-methyl-2-oxopentanoate + CO2 + NADH. The protein operates within amino-acid biosynthesis; L-leucine biosynthesis; L-leucine from 3-methyl-2-oxobutanoate: step 3/4. It participates in secondary metabolite biosynthesis. Regulated by a thiol-based redox modification; oxidation by CuCl(2) leads to a decreased activity. Involved in both glucosinolate and leucine biosynthesis; catalyzes the oxidative decarboxylation step in both leucine biosynthesis (primary metabolism) and methionine chain elongation of glucosinolates (specialized metabolism). Catalyzes the oxidation of 3-carboxy-2-hydroxy-4-methylpentanoate (3-isopropylmalate, 3-IPM) to 3-carboxy-4-methyl-2-oxopentanoate. The product decarboxylates to 4-methyl-2 oxopentanoate. Required during pollen development and involved in embryo sac development. More active on 3-isopropylmalate and NAD(+) than towards D-malate. In Arabidopsis thaliana (Mouse-ear cress), this protein is 3-isopropylmalate dehydrogenase 1, chloroplastic.